A 498-amino-acid polypeptide reads, in one-letter code: Succinate-semialdehyde dehydrogenase [NADP(+)] 1 (498 aa).

An NAD(+)-binding site is contributed by Gly-247–Gly-252. Residues Glu-269 and Cys-303 contribute to the active site.

Belongs to the aldehyde dehydrogenase family. As to quaternary structure, homotetramer.

Its subcellular location is the cytoplasm. It carries out the reaction succinate semialdehyde + NAD(+) + H2O = succinate + NADH + 2 H(+). The enzyme catalyses succinate semialdehyde + NADP(+) + H2O = succinate + NADPH + 2 H(+). It functions in the pathway amino-acid degradation; 4-aminobutanoate degradation. Functionally, catalyzes the oxidation of succinate semialdehyde to succinate. Can utilize both NAD(+) or NADP(+) as a coenzyme. Functions in a gamma-aminobutyrate (GABA) degradation pathway that allows growth utilizing GABA as a nitrogen source. Functions in the GABA shunt, which allows to bypass 2 reactions in the TCA cycle by removing alpha-ketoglutarate from the cycle and feeding succinate and NADH back into the cycle. This chain is Succinate-semialdehyde dehydrogenase [NADP(+)] 1 (ssd1), found in Schizosaccharomyces pombe (strain 972 / ATCC 24843) (Fission yeast).